A 120-amino-acid polypeptide reads, in one-letter code: UPF0102 protein CbuK_0265 (120 aa).

The protein belongs to the UPF0102 family.

The chain is UPF0102 protein CbuK_0265 from Coxiella burnetii (strain CbuK_Q154) (Coxiella burnetii (strain Q154)).